A 305-amino-acid polypeptide reads, in one-letter code: MEKKFKVAALYCFADLKHYQKLQKPLLDLCQENGIKGTLLLAKEGINGTVAGSCAAIETLVRFITAEPAFQTPELKYSWASKMPFHRIKVRLKKEIVTMGVEGINPLKAVGTYVAPEDWNALIQDEETLVVDTRNDYEYMLGSFQGAVDPNIKTFREFPQWVANHQDELKKKKRIAMFCTGGIRCEKSTSYMRELGYEEVYHLKGGILQYLETIPKEESLWQGECFVFDERVSVRHGLEESGRELCRACRYPLGAEGKLSSHYEEGVSCDACYDTRSEFDKQRFRERHRQFQLAKARTMNSHQGL.

A Rhodanese domain is found at glutamine 124 to serine 219. Catalysis depends on cysteine 179, which acts as the Cysteine persulfide intermediate.

Belongs to the TrhO family.

It carries out the reaction uridine(34) in tRNA + AH2 + O2 = 5-hydroxyuridine(34) in tRNA + A + H2O. In terms of biological role, catalyzes oxygen-dependent 5-hydroxyuridine (ho5U) modification at position 34 in tRNAs. The sequence is that of tRNA uridine(34) hydroxylase from Bartonella bacilliformis (strain ATCC 35685 / KC583 / Herrer 020/F12,63).